Reading from the N-terminus, the 551-residue chain is Pentatricopeptide repeat-containing protein At3g13150 (551 aa).

Positions 22-67 are disordered; that stretch reads ATAKSAKPRSQTKSTKFPSKLKASTASVGDGGQSSNDAKDSKNSKL. Over residues 29-48 the composition is skewed to polar residues; the sequence is PRSQTKSTKFPSKLKASTAS. Over residues 58-67 the composition is skewed to basic and acidic residues; sequence DAKDSKNSKL. 7 PPR repeats span residues 121-155, 156-191, 192-226, 227-261, 262-296, 297-331, and 332-366; these read SEDF…NCER, TVKS…GITP, DLVT…GFEP, DLIS…NLSP, NIRS…GISP, DVHT…GLTP, and DTVT…KLLS. Disordered regions lie at residues 409-435 and 449-551; these read GKKK…SPDT and SSSD…LLDD. Low complexity predominate over residues 415–435; that stretch reads SSPVSSSAKTTSTPVSSSPDT.

This sequence belongs to the PPR family. P subfamily.

This is Pentatricopeptide repeat-containing protein At3g13150 from Arabidopsis thaliana (Mouse-ear cress).